Here is a 661-residue protein sequence, read N- to C-terminus: MKAVVFAYHDMGCTGIQALLDAGYDIAAIFTHPDNPGENHFFGSVARLAAEQGIPVWAPEDVNHPLWIERIREMKPDVLFSFYYRNLLGDEILNLAPKGAFNLHGSLLPKYRGRAPLNWVLVNGESETGVTLHRMVNRADAGDIVAQQAVAIGADDAALTLHRKLCAAATELLSRALPAILAGTTDERPQDHSQATYVGRRTPEDGRLDWELPAQTLHNLVRAVSDPWPGAFGYAGANKFIVWKSRVRHDLPAAKPGTVLSIAPLIVACQDGALEIVTGQTERGVYMQGAQLAQALGLVSGAVISSKPVVAIKRRTRVLILGVNGFIGNHLTERLLQDDNYEIYGLDIGSDAISRFLDCPRFHFVEGDISIHSEWIEYHIKKCDVVLPLVAIATPIEYTRNPLRVFELDFEENLKIIRDCVKYNKRIIFPSTSEVYGMCTDKNFDEDSSNLVVGPINKQRWIYSVSKQLLDRVIWAYGDKNGLKFTLFRPFNWMGPRLDNLNAARIGSSRAITQLILNLVEGSPIKLIEGGKQKRCFTDISDGIEALFRIIENKDGRCDGQIINIGNPDNEASIKELAEMLLACFERHPLRDRFPPFAGFREVESSDYYGKGYQDVEHRKPSIRNAKRCLNWEPKVEMEETVEHTLDFFLRTVELVDDKNP.

The tract at residues 1-304 is formyltransferase ArnAFT; the sequence is MKAVVFAYHD…ALGLVSGAVI (304 aa). H104 (proton donor; for formyltransferase activity) is an active-site residue. (6R)-10-formyltetrahydrofolate is bound by residues R114 and 136–140; that span reads VNRAD. The segment at 314-661 is dehydrogenase ArnADH; the sequence is RRTRVLILGV…TVELVDDKNP (348 aa). Residues D347 and 368–369 each bind NAD(+); that span reads DI. UDP-alpha-D-glucuronate-binding positions include A393, Y398, and 432–433; that span reads TS. The active-site Proton acceptor; for decarboxylase activity is E434. Residues R460, N492, 526–535, and Y613 each bind UDP-alpha-D-glucuronate; that span reads KLIEGGKQKR. Residue R619 is the Proton donor; for decarboxylase activity of the active site.

In the N-terminal section; belongs to the Fmt family. UDP-L-Ara4N formyltransferase subfamily. The protein in the C-terminal section; belongs to the NAD(P)-dependent epimerase/dehydratase family. UDP-glucuronic acid decarboxylase subfamily. As to quaternary structure, homohexamer, formed by a dimer of trimers.

It catalyses the reaction UDP-alpha-D-glucuronate + NAD(+) = UDP-beta-L-threo-pentopyranos-4-ulose + CO2 + NADH. The enzyme catalyses UDP-4-amino-4-deoxy-beta-L-arabinose + (6R)-10-formyltetrahydrofolate = UDP-4-deoxy-4-formamido-beta-L-arabinose + (6S)-5,6,7,8-tetrahydrofolate + H(+). It participates in nucleotide-sugar biosynthesis; UDP-4-deoxy-4-formamido-beta-L-arabinose biosynthesis; UDP-4-deoxy-4-formamido-beta-L-arabinose from UDP-alpha-D-glucuronate: step 1/3. The protein operates within nucleotide-sugar biosynthesis; UDP-4-deoxy-4-formamido-beta-L-arabinose biosynthesis; UDP-4-deoxy-4-formamido-beta-L-arabinose from UDP-alpha-D-glucuronate: step 3/3. Its pathway is bacterial outer membrane biogenesis; lipopolysaccharide biosynthesis. Functionally, bifunctional enzyme that catalyzes the oxidative decarboxylation of UDP-glucuronic acid (UDP-GlcUA) to UDP-4-keto-arabinose (UDP-Ara4O) and the addition of a formyl group to UDP-4-amino-4-deoxy-L-arabinose (UDP-L-Ara4N) to form UDP-L-4-formamido-arabinose (UDP-L-Ara4FN). The modified arabinose is attached to lipid A and is required for resistance to polymyxin and cationic antimicrobial peptides. This chain is Bifunctional polymyxin resistance protein ArnA, found in Klebsiella pneumoniae subsp. pneumoniae (strain ATCC 700721 / MGH 78578).